We begin with the raw amino-acid sequence, 85 residues long: Probable oxaloacetate decarboxylase gamma chain (85 aa).

Residues 11 to 33 traverse the membrane as a helical segment; sequence AATLMVTGMAVVFIFLTILVYLV.

This sequence belongs to the OadG family. In terms of assembly, heterotrimer of an alpha, a beta and a gamma subunit. Requires Na(+) as cofactor.

Its subcellular location is the cell membrane. It carries out the reaction oxaloacetate + 2 Na(+)(in) + H(+) = pyruvate + 2 Na(+)(out) + CO2. In terms of biological role, catalyzes the decarboxylation of oxaloacetate coupled to Na(+) translocation. The sequence is that of Probable oxaloacetate decarboxylase gamma chain from Vibrio parahaemolyticus serotype O3:K6 (strain RIMD 2210633).